The following is a 138-amino-acid chain: Single-stranded DNA-binding protein 3 (138 aa).

Residues 1–104 (MINNIVLVGR…VVAENFQLLE (104 aa)) enclose the SSB domain. The segment covering 105-121 (SRNSQQQTNQSGNSSNS) has biased composition (low complexity). Positions 105-138 (SRNSQQQTNQSGNSSNSYFGNANKMDISDDDLPF) are disordered. The short motif at 133–138 (DDDLPF) is the Important for interaction with partner proteins element.

Homotetramer.

Its function is as follows. Plays an important role in DNA replication, recombination and repair. Binds to ssDNA and to an array of partner proteins to recruit them to their sites of action during DNA metabolism. This chain is Single-stranded DNA-binding protein 3 (ssb3), found in Streptococcus agalactiae serotype V (strain ATCC BAA-611 / 2603 V/R).